A 1327-amino-acid polypeptide reads, in one-letter code: ABC transporter 1 (1327 aa).

The next 6 helical transmembrane spans lie at 47–67 (LGIL…IIFG), 100–120 (VYVG…WNLF), 170–190 (KVGI…IAFV), 195–215 (LGGE…VGGY), 228–248 (VAGA…VHAF), and 276–296 (VAVQ…LAFW). The ABC transmembrane type-1 1 domain maps to 47–326 (LGILAAIASG…TTYTVIFLLV (280 aa)). N-linked (GlcNAc...) asparagine glycans are attached at residues N381, N390, and N406. The 278-residue stretch at 386 to 663 (IELNNVSFAF…DGAYAGLVRL (278 aa)) folds into the ABC transporter 1 domain. 421–428 (GLSGSGKS) provides a ligand contact to ATP. N463 and N674 each carry an N-linked (GlcNAc...) asparagine glycan. 6 helical membrane passes run 743-763 (FLAL…AVVF), 785-805 (FYGL…LGSW), 859-881 (LTGS…IALS), 888-910 (IALV…VITM), 971-991 (LWLA…YWWG), and 1005-1025 (FFIV…MFTL). In terms of domain architecture, ABC transmembrane type-1 2 spans 743–1031 (FLALTSAFVV…MFTLAPDVSR (289 aa)). A glycan (N-linked (GlcNAc...) asparagine) is linked at N1050. Positions 1054 to 1081 (PCQHLKPGNDLEANAEPREKRPDQSQGG) are disordered. The region spanning 1084–1323 (VSLNNVKFSY…SESYKINALH (240 aa)) is the ABC transporter 2 domain. 1119–1126 (GPSGAGKS) lines the ATP pocket.

It belongs to the ABC transporter superfamily. ABCB family. Multidrug resistance exporter (TC 3.A.1.201) subfamily.

The protein localises to the membrane. Its function is as follows. ABC transporter; part of the gene cluster that mediates the biosynthesis of hydroxamate-containing siderophores that play a critical role in virulence via intracellular iron acquisition during macrophage infection. Probably involved in the excretion of the extracellular siderophores. This Ajellomyces capsulatus (Darling's disease fungus) protein is ABC transporter 1.